A 248-amino-acid chain; its full sequence is Metallo-beta-lactamase type 2 (248 aa).

Positions 1-21 are cleaved as a signal peptide; sequence MKRLKGLLVLALGFTGLQVFG. Zn(2+) is bound by residues His-97, His-99, Asp-101, His-160, and Cys-179. Position 182 (Lys-182) interacts with substrate. Position 221 (His-221) interacts with Zn(2+).

Belongs to the metallo-beta-lactamase superfamily. Class-B beta-lactamase family. As to quaternary structure, monomer. Zn(2+) serves as cofactor.

It localises to the periplasm. The enzyme catalyses a beta-lactam + H2O = a substituted beta-amino acid. In terms of biological role, confers resistance to the different beta-lactams antibiotics (penicillin, cephalosporin and carbapenem) via the hydrolysis of the beta-lactam ring. The polypeptide is Metallo-beta-lactamase type 2 (blaB6) (Elizabethkingia meningoseptica (Chryseobacterium meningosepticum)).